Here is a 572-residue protein sequence, read N- to C-terminus: Urease subunit alpha (572 aa).

One can recognise a Urease domain in the interval 133-572 (GGIDLHVHYI…TSLSQRYFLF (440 aa)). The Ni(2+) site is built by His138, His140, and Lys221. The residue at position 221 (Lys221) is an N6-carboxylysine. His223 contributes to the substrate binding site. 2 residues coordinate Ni(2+): His250 and His276. The Proton donor role is filled by His324. Asp364 is a binding site for Ni(2+).

This sequence belongs to the metallo-dependent hydrolases superfamily. Urease alpha subunit family. In terms of assembly, heterotrimer of UreA (gamma), UreB (beta) and UreC (alpha) subunits. Three heterotrimers associate to form the active enzyme. Requires Ni cation as cofactor. In terms of processing, carboxylation allows a single lysine to coordinate two nickel ions.

Its subcellular location is the cytoplasm. The enzyme catalyses urea + 2 H2O + H(+) = hydrogencarbonate + 2 NH4(+). It participates in nitrogen metabolism; urea degradation; CO(2) and NH(3) from urea (urease route): step 1/1. Its function is as follows. Ureolysis may allow urea to be employed as a nitrogen source for growth and produces ammonia which may protect from killing at low pH. The chain is Urease subunit alpha from Streptococcus salivarius (strain 57.I).